The following is a 209-amino-acid chain: Uracil phosphoribosyltransferase (209 aa).

Residues R79, R104, and 131–139 (DPMLATGVS) each bind 5-phospho-alpha-D-ribose 1-diphosphate. Uracil-binding positions include I194 and 199 to 201 (GDA). Residue D200 coordinates 5-phospho-alpha-D-ribose 1-diphosphate.

The protein belongs to the UPRTase family. Mg(2+) serves as cofactor.

It catalyses the reaction UMP + diphosphate = 5-phospho-alpha-D-ribose 1-diphosphate + uracil. The protein operates within pyrimidine metabolism; UMP biosynthesis via salvage pathway; UMP from uracil: step 1/1. Its activity is regulated as follows. Allosterically activated by GTP. Catalyzes the conversion of uracil and 5-phospho-alpha-D-ribose 1-diphosphate (PRPP) to UMP and diphosphate. This is Uracil phosphoribosyltransferase from Thermotoga petrophila (strain ATCC BAA-488 / DSM 13995 / JCM 10881 / RKU-1).